The chain runs to 460 residues: Hydroxymethylglutaryl-CoA synthase erg13B (460 aa).

Glutamate 86 serves as the catalytic Proton donor/acceptor. Cysteine 120 (acyl-thioester intermediate) is an active-site residue. Residues cysteine 120, threonine 162, serine 212, histidine 263, lysine 272, asparagine 340, and serine 374 each contribute to the (3S)-3-hydroxy-3-methylglutaryl-CoA site. Histidine 263 functions as the Proton donor/acceptor in the catalytic mechanism.

It belongs to the thiolase-like superfamily. HMG-CoA synthase family.

It carries out the reaction acetoacetyl-CoA + acetyl-CoA + H2O = (3S)-3-hydroxy-3-methylglutaryl-CoA + CoA + H(+). Its pathway is metabolic intermediate biosynthesis; (R)-mevalonate biosynthesis; (R)-mevalonate from acetyl-CoA: step 2/3. Its function is as follows. Hydroxymethylglutaryl-CoA synthase; part of the first module of ergosterol biosynthesis pathway that includes the early steps of the pathway, conserved across all eukaryotes, and which results in the formation of mevalonate from acetyl-coenzyme A (acetyl-CoA). Erg13A and erg13B condense acetyl-CoA with acetoacetyl-CoA to form hydroxymethylglutaryl-CoA (HMG-CoA). The first module starts with the action of the cytosolic acetyl-CoA acetyltransferase erg10B that catalyzes the formation of acetoacetyl-CoA. The hydroxymethylglutaryl-CoA synthases erg13A and erg13B then condense acetyl-CoA with acetoacetyl-CoA to form HMG-CoA. The rate-limiting step of the early module is the reduction to mevalonate by the 3-hydroxy-3-methylglutaryl-coenzyme A (HMG-CoA) reductases hmg1 and hmg2. Mevalonate is also a precursor for the extracellular siderophore triacetylfusarinine C (TAFC). This is Hydroxymethylglutaryl-CoA synthase erg13B from Aspergillus fumigatus (strain ATCC MYA-4609 / CBS 101355 / FGSC A1100 / Af293) (Neosartorya fumigata).